The following is a 115-amino-acid chain: Protamine-2 (115 aa).

A disordered region spans residues 1–115; that stretch reads MVRCHVKSPT…RRRRRCGRQL (115 aa). Position 8 is a phosphoserine (Ser8). Positions 24–38 are enriched in basic and acidic residues; that stretch reads ETEHPDQARELRPED. Composition is skewed to basic residues over residues 44 to 79 and 102 to 115; these read RTHR…RRRG and RRMR…GRQL.

The protein belongs to the protamine P2 family. As to quaternary structure, interacts with TDRP. Post-translationally, proteolytic processing into mature chains is required for histone eviction during spermatogenesis. Transition proteins (TNP1 and TNP2) are required for processing. As to expression, testis.

The protein localises to the nucleus. It localises to the chromosome. In terms of biological role, protamines substitute for histones in the chromatin of sperm during the haploid phase of spermatogenesis. They compact sperm DNA into a highly condensed, stable and inactive complex. The polypeptide is Protamine-2 (PRM2) (Bos taurus (Bovine)).